Consider the following 91-residue polypeptide: Small integral membrane protein 12 (91 aa).

The chain crosses the membrane as a helical span at residues 12–34 (YAPYITFPVAFVVGAVGYQLEWF).

This sequence belongs to the SMIM12 family.

It is found in the membrane. The chain is Small integral membrane protein 12 (smim12) from Xenopus tropicalis (Western clawed frog).